Here is a 115-residue protein sequence, read N- to C-terminus: Large ribosomal subunit protein eL36 (115 aa).

This sequence belongs to the eukaryotic ribosomal protein eL36 family. As to quaternary structure, component of the large ribosomal subunit.

It is found in the cytoplasm. The protein localises to the cytosol. In terms of biological role, component of the large ribosomal subunit. This Drosophila melanogaster (Fruit fly) protein is Large ribosomal subunit protein eL36 (RpL36).